The chain runs to 287 residues: Ribonuclease HII (287 aa).

The RNase H type-2 domain maps to 61 to 287 (ALQIGVDEAG…FAPVRKALES (227 aa)). The a divalent metal cation site is built by D67, E68, and D186.

It belongs to the RNase HII family. Mn(2+) is required as a cofactor. It depends on Mg(2+) as a cofactor.

It is found in the cytoplasm. It carries out the reaction Endonucleolytic cleavage to 5'-phosphomonoester.. In terms of biological role, endonuclease that specifically degrades the RNA of RNA-DNA hybrids. The sequence is that of Ribonuclease HII from Psychrobacter arcticus (strain DSM 17307 / VKM B-2377 / 273-4).